The sequence spans 317 residues: Zinc metalloproteinase/disintegrin (317 aa).

Positions 1-26 are excised as a propeptide; that stretch reads EAPKMCGVTQNWESYEPIKKASQSNL. One can recognise a Peptidase M12B domain in the interval 32 to 228; sequence RYIELVIVAD…QKPQCILNKP (197 aa). Ca(2+) is bound by residues Glu35 and Asp119. 3 cysteine pairs are disulfide-bonded: Cys143/Cys223, Cys183/Cys207, and Cys185/Cys190. His168 contacts Zn(2+). Glu169 is an active-site residue. Residues His172 and His178 each contribute to the Zn(2+) site. Ca(2+) is bound by residues Cys223 and Asn226. Residues 229-244 constitute a propeptide that is removed on maturation; that stretch reads LRTDTVSTPVSGNELL. A Disintegrin domain is found at 236 to 317; sequence TPVSGNELLE…AGCPRNPFHA (82 aa). 6 disulfides stabilise this stretch: Cys250/Cys259, Cys252/Cys260, Cys265/Cys279, Cys273/Cys303, Cys278/Cys282, and Cys291/Cys310. The Cell attachment site signature appears at 295 to 297; it reads RGD.

Belongs to the venom metalloproteinase (M12B) family. P-II subfamily. P-IIa sub-subfamily. As to quaternary structure, monomer. The cofactor is Zn(2+). In terms of tissue distribution, expressed by the venom gland.

It is found in the secreted. Functionally, metalloproteinase that impairs hemostasis in the envenomed animal. Its function is as follows. Inhibits GPIIb/GPIIIa (ITGA2B/ITGB3) binding to immobilized fibrinogen with an IC(50) of 2.2 nM and ADP-induced platelet aggregation with an IC(50) of 131 nM, respectively. Inhibits angiogenesis. By binding to vitronectin receptor (alpha-V/beta-3 (ITGAV/ITGB3)), also induces apoptosis of endothelial cells by blocking their attachment to extracellular matrix proteins. In terms of biological role, inhibits platelet aggregation induced by ADP (IC(50) is 30 nM), collagen (IC(50) is 500 nM), thrombin and epinephrin (IC(50) is 160 nM). In Gloydius brevicauda (Korean slamosa snake), this protein is Zinc metalloproteinase/disintegrin.